A 376-amino-acid polypeptide reads, in one-letter code: UDP-4-amino-4,6-dideoxy-N-acetyl-beta-L-altrosamine transaminase (376 aa).

Substrate-binding positions include Tyr-4, 24–27, Ala-54, and Ser-176; that span reads EILT. Residue Lys-181 is modified to N6-(pyridoxal phosphate)lysine. Substrate contacts are provided by residues Asn-226 and 311 to 314; that span reads QVHY.

The protein belongs to the DegT/DnrJ/EryC1 family.

It carries out the reaction UDP-4-amino-4,6-dideoxy-N-acetyl-beta-L-altrosamine + 2-oxoglutarate = UDP-2-acetamido-2,6-dideoxy-beta-L-arabino-hex-4-ulose + L-glutamate. Functionally, catalyzes the second step in the biosynthesis of pseudaminic acid, a sialic-acid-like sugar that is used to modify flagellin. Uses UDP-2-acetamido-2,6-dideoxy-beta-L-arabino-4-hexulose as substrate producing UDP-4-amino-4,6-dideoxy-beta-L-AltNAc. This Campylobacter jejuni subsp. jejuni serotype O:23/36 (strain 81-176) protein is UDP-4-amino-4,6-dideoxy-N-acetyl-beta-L-altrosamine transaminase (pseC).